Reading from the N-terminus, the 352-residue chain is Molybdenum import ATP-binding protein ModC (352 aa).

The region spanning 1–229 (MLELNFSQTL…SVMHPWLPKE (229 aa)) is the ABC transporter domain. An ATP-binding site is contributed by 31 to 38 (GVSGAGKT). A Mop domain is found at 289–352 (QTSIRNVLRA…AQVKSVSITA (64 aa)).

Belongs to the ABC transporter superfamily. Molybdate importer (TC 3.A.1.8) family. As to quaternary structure, the complex is composed of two ATP-binding proteins (ModC), two transmembrane proteins (ModB) and a solute-binding protein (ModA).

The protein localises to the cell inner membrane. The enzyme catalyses molybdate(out) + ATP + H2O = molybdate(in) + ADP + phosphate + H(+). Part of the ABC transporter complex ModABC involved in molybdenum import. Responsible for energy coupling to the transport system. The chain is Molybdenum import ATP-binding protein ModC from Salmonella typhi.